A 337-amino-acid polypeptide reads, in one-letter code: Heme A synthase (337 aa).

5 helical membrane-spanning segments follow: residues 6 to 26 (ITKW…IGGI), 87 to 107 (FIHR…LIYF), 119 to 139 (LPYI…WYMV), 154 to 174 (LAFH…QLIK), and 192 to 212 (LIFS…GALV). His-256 contributes to the heme binding site. Helical transmembrane passes span 258–278 (LVGY…LKIE), 285–305 (IAYF…ITLL), and 308–328 (VPII…SIII). His-316 serves as a coordination point for heme.

It belongs to the COX15/CtaA family. Type 2 subfamily. In terms of assembly, interacts with CtaB. Heme b serves as cofactor.

The protein localises to the cell membrane. It catalyses the reaction Fe(II)-heme o + 2 A + H2O = Fe(II)-heme a + 2 AH2. The protein operates within porphyrin-containing compound metabolism; heme A biosynthesis; heme A from heme O: step 1/1. Catalyzes the conversion of heme O to heme A by two successive hydroxylations of the methyl group at C8. The first hydroxylation forms heme I, the second hydroxylation results in an unstable dihydroxymethyl group, which spontaneously dehydrates, resulting in the formyl group of heme A. The protein is Heme A synthase of Rickettsia africae (strain ESF-5).